The following is a 198-amino-acid chain: Recombination protein RecR (198 aa).

The segment at 58–73 (CSVCNNLTEKDPCDFC) adopts a C4-type zinc-finger fold. Positions 81-175 (NLICVVESPK…KVTRIAHGLP (95 aa)) constitute a Toprim domain.

This sequence belongs to the RecR family.

Functionally, may play a role in DNA repair. It seems to be involved in an RecBC-independent recombinational process of DNA repair. It may act with RecF and RecO. The protein is Recombination protein RecR of Halothermothrix orenii (strain H 168 / OCM 544 / DSM 9562).